Reading from the N-terminus, the 152-residue chain is Deoxyuridine 5'-triphosphate nucleotidohydrolase (152 aa).

Substrate-binding positions include 71–73 (RSG), asparagine 84, 88–90 (LID), and methionine 98.

It belongs to the dUTPase family. Mg(2+) serves as cofactor.

The enzyme catalyses dUTP + H2O = dUMP + diphosphate + H(+). It participates in pyrimidine metabolism; dUMP biosynthesis; dUMP from dCTP (dUTP route): step 2/2. This enzyme is involved in nucleotide metabolism: it produces dUMP, the immediate precursor of thymidine nucleotides and it decreases the intracellular concentration of dUTP so that uracil cannot be incorporated into DNA. The sequence is that of Deoxyuridine 5'-triphosphate nucleotidohydrolase from Coxiella burnetii (strain Dugway 5J108-111).